Reading from the N-terminus, the 351-residue chain is Putative [LysW]-L-2-aminoadipate/[LysW]-L-glutamate phosphate reductase (351 aa).

Residues 9-12 (SGFV) and 33-35 (SRR) contribute to the NADP(+) site. Cys150 is an active-site residue. Position 318 (Asn318) interacts with NADP(+).

Belongs to the NAGSA dehydrogenase family. Type 1 subfamily. LysY sub-subfamily.

The protein resides in the cytoplasm. The enzyme catalyses [amino-group carrier protein]-C-terminal-N-(1-carboxy-5-oxopentan-1-yl)-L-glutamine + phosphate + NADP(+) = [amino-group carrier protein]-C-terminal-N-(1-carboxy-5-phosphooxy-5-oxopentan-1-yl)-L-glutamine + NADPH + H(+). It catalyses the reaction [amino-group carrier protein]-C-terminal-gamma-(L-glutamyl-5-semialdehyde)-L-glutamate + phosphate + NADP(+) = [amino-group carrier protein]-C-terminal-gamma-(5-phospho-L-glutamyl)-L-glutamate + NADPH + H(+). Its pathway is amino-acid biosynthesis; L-lysine biosynthesis via AAA pathway; L-lysine from L-alpha-aminoadipate (Thermus route): step 3/5. It participates in amino-acid biosynthesis; L-arginine biosynthesis. Involved in both the arginine and lysine biosynthetic pathways. The polypeptide is Putative [LysW]-L-2-aminoadipate/[LysW]-L-glutamate phosphate reductase (Pyrobaculum aerophilum (strain ATCC 51768 / DSM 7523 / JCM 9630 / CIP 104966 / NBRC 100827 / IM2)).